Consider the following 218-residue polypeptide: Ras-related protein Rab-42 (218 aa).

The GTP site is built by alanine 19, glycine 21, lysine 22, threonine 23, and threonine 46. Residues threonine 23, threonine 46, and aspartate 70 each coordinate Mg(2+). GTP is bound by residues glycine 73, lysine 130, aspartate 132, valine 160, and lysine 161. S-geranylgeranyl cysteine attachment occurs at residues cysteine 216 and cysteine 218.

The protein belongs to the small GTPase superfamily. Rab family. Mg(2+) is required as a cofactor.

It is found in the membrane. The catalysed reaction is GTP + H2O = GDP + phosphate + H(+). With respect to regulation, regulated by guanine nucleotide exchange factors (GEFs) which promote the exchange of bound GDP for free GTP. Regulated by GTPase activating proteins (GAPs) which increase the GTP hydrolysis activity. Inhibited by GDP dissociation inhibitors (GDIs). The small GTPases Rab are key regulators of intracellular membrane trafficking, from the formation of transport vesicles to their fusion with membranes. Rabs cycle between an inactive GDP-bound form and an active GTP-bound form that is able to recruit to membranes different sets of downstream effectors directly responsible for vesicle formation, movement, tethering and fusion. The physiological function of RAB42 remains undefined. The sequence is that of Ras-related protein Rab-42 from Homo sapiens (Human).